The primary structure comprises 500 residues: Protein nucleotidyltransferase YdiU (500 aa).

Residues glycine 98, glycine 100, arginine 101, lysine 124, aspartate 136, glycine 137, arginine 187, and arginine 194 each coordinate ATP. Catalysis depends on aspartate 263, which acts as the Proton acceptor. Mg(2+) contacts are provided by asparagine 264 and aspartate 273. Residue aspartate 273 participates in ATP binding.

This sequence belongs to the SELO family. Mg(2+) is required as a cofactor. Requires Mn(2+) as cofactor.

The catalysed reaction is L-seryl-[protein] + ATP = 3-O-(5'-adenylyl)-L-seryl-[protein] + diphosphate. It catalyses the reaction L-threonyl-[protein] + ATP = 3-O-(5'-adenylyl)-L-threonyl-[protein] + diphosphate. It carries out the reaction L-tyrosyl-[protein] + ATP = O-(5'-adenylyl)-L-tyrosyl-[protein] + diphosphate. The enzyme catalyses L-histidyl-[protein] + UTP = N(tele)-(5'-uridylyl)-L-histidyl-[protein] + diphosphate. The catalysed reaction is L-seryl-[protein] + UTP = O-(5'-uridylyl)-L-seryl-[protein] + diphosphate. It catalyses the reaction L-tyrosyl-[protein] + UTP = O-(5'-uridylyl)-L-tyrosyl-[protein] + diphosphate. In terms of biological role, nucleotidyltransferase involved in the post-translational modification of proteins. It can catalyze the addition of adenosine monophosphate (AMP) or uridine monophosphate (UMP) to a protein, resulting in modifications known as AMPylation and UMPylation. This Herminiimonas arsenicoxydans protein is Protein nucleotidyltransferase YdiU.